A 101-amino-acid polypeptide reads, in one-letter code: Small ribosomal subunit protein uS10 (101 aa).

It belongs to the universal ribosomal protein uS10 family. Part of the 30S ribosomal subunit.

Its function is as follows. Involved in the binding of tRNA to the ribosomes. The protein is Small ribosomal subunit protein uS10 of Mycobacterium bovis (strain ATCC BAA-935 / AF2122/97).